A 30-amino-acid polypeptide reads, in one-letter code: Photosystem I reaction center subunit XII (30 aa).

A helical transmembrane segment spans residues 5 to 25 (SQIFFALCIALTAAVLAIGLG).

The protein belongs to the PsaM family.

The protein localises to the plastid. The protein resides in the chloroplast thylakoid membrane. The protein is Photosystem I reaction center subunit XII of Emiliania huxleyi (Coccolithophore).